The primary structure comprises 84 residues: MAHKKAGGSTRNGRDSESKRLGVKRFGGESVLAGNIIVRQRGTKFHAGVNVGVGRDHTLFALTDGKVKFEVKGPNNRKFISIEA.

The interval 1-22 (MAHKKAGGSTRNGRDSESKRLG) is disordered.

It belongs to the bacterial ribosomal protein bL27 family.

The polypeptide is Large ribosomal subunit protein bL27 (Shewanella sp. (strain MR-4)).